We begin with the raw amino-acid sequence, 406 residues long: uncharacterized protein (406 aa).

The next 10 membrane-spanning stretches (helical) occupy residues 7–27 (SILFSQTTTNLGFSLYTMVVI), 43–63 (VTLISIIFRIFGSAILPLITI), 69–89 (LTIIISQLIQMLLLICLFYAL), 98–118 (LILVFIIISCISFFNGWFSPL), 155–175 (GLIIAFLGEGYTIILTIFLLF), 220–240 (IIIMDLIESWAGMIWIGSVSL), 253–273 (WWGFINGAYYLGSMIGGFIIY), 297–317 (LTLIYGFISNSYLALILVLFM), 352–372 (VQFIFMFSILAIGAISDFLGV), and 374–394 (LVYVSAGILLLVSAIYGFSQL).

Belongs to the major facilitator superfamily.

The protein localises to the cell membrane. This is an uncharacterized protein from Bacillus subtilis (strain 168).